Reading from the N-terminus, the 679-residue chain is Glycine--tRNA ligase beta subunit (679 aa).

It belongs to the class-II aminoacyl-tRNA synthetase family. Tetramer of two alpha and two beta subunits.

The protein resides in the cytoplasm. The catalysed reaction is tRNA(Gly) + glycine + ATP = glycyl-tRNA(Gly) + AMP + diphosphate. The sequence is that of Glycine--tRNA ligase beta subunit from Streptococcus mutans serotype c (strain ATCC 700610 / UA159).